The primary structure comprises 99 residues: MNPANYLYLSALLFTIGASGVLLRRNAIVMFMCVELMLNAVNLAFVTFARMHGHLDGQMIAFFTMVVAACEVVVGLAIIMTIFRTRKSASVDDANLLKG.

Transmembrane regions (helical) follow at residues proline 3–leucine 23, isoleucine 28–phenylalanine 48, and methionine 59–isoleucine 79.

Belongs to the complex I subunit 4L family. NDH-1 is composed of 14 different subunits. Subunits NuoA, H, J, K, L, M, N constitute the membrane sector of the complex.

Its subcellular location is the cell membrane. The catalysed reaction is a quinone + NADH + 5 H(+)(in) = a quinol + NAD(+) + 4 H(+)(out). NDH-1 shuttles electrons from NADH, via FMN and iron-sulfur (Fe-S) centers, to quinones in the respiratory chain. The immediate electron acceptor for the enzyme in this species is believed to be a menaquinone. Couples the redox reaction to proton translocation (for every two electrons transferred, four hydrogen ions are translocated across the cytoplasmic membrane), and thus conserves the redox energy in a proton gradient. This is NADH-quinone oxidoreductase subunit K from Mycobacterium marinum (strain ATCC BAA-535 / M).